The chain runs to 246 residues: Anamorsin homolog (246 aa).

Positions 1–124 (MRVVVVDLDG…ARGTAFSLKS (124 aa)) are N-terminal SAM-like domain. Residues 125–158 (RAVRVVTADAGWGADADVDDELIDESALLTELDV) are linker. 4 residues coordinate [2Fe-2S] cluster: C168, C177, C180, and C182. Positions 168–182 (CDVGAGKKACKNCTC) are fe-S binding site A. C206, C209, C217, and C220 together coordinate [4Fe-4S] cluster. 2 consecutive short sequence motifs (cx2C motif) follow at residues 206–209 (CGNC) and 217–220 (CAGC). The segment at 206 to 220 (CGNCALGDAFRCAGC) is fe-S binding site B.

The protein belongs to the anamorsin family. As to quaternary structure, monomer. Requires [2Fe-2S] cluster as cofactor. The cofactor is [4Fe-4S] cluster.

It is found in the cytoplasm. The protein localises to the mitochondrion intermembrane space. Functionally, component of the cytosolic iron-sulfur (Fe-S) protein assembly (CIA) machinery. Required for the maturation of extramitochondrial Fe-S proteins. Part of an electron transfer chain functioning in an early step of cytosolic Fe-S biogenesis, facilitating the de novo assembly of a [4Fe-4S] cluster on the cytosolic Fe-S scaffold complex. Electrons are transferred from NADPH via a FAD- and FMN-containing diflavin oxidoreductase. Together with the diflavin oxidoreductase, also required for the assembly of the diferric tyrosyl radical cofactor of ribonucleotide reductase (RNR), probably by providing electrons for reduction during radical cofactor maturation in the catalytic small subunit. The protein is Anamorsin homolog of Ostreococcus tauri.